The primary structure comprises 131 residues: D-ribose pyranase (131 aa).

His20 (proton donor) is an active-site residue. Substrate-binding positions include Asp28, His98, and 120–122; that span reads YAN.

Belongs to the RbsD / FucU family. RbsD subfamily. As to quaternary structure, homodecamer.

The protein resides in the cytoplasm. It catalyses the reaction beta-D-ribopyranose = beta-D-ribofuranose. Its pathway is carbohydrate metabolism; D-ribose degradation; D-ribose 5-phosphate from beta-D-ribopyranose: step 1/2. Catalyzes the interconversion of beta-pyran and beta-furan forms of D-ribose. In Clostridium perfringens (strain ATCC 13124 / DSM 756 / JCM 1290 / NCIMB 6125 / NCTC 8237 / Type A), this protein is D-ribose pyranase.